The chain runs to 549 residues: Eukaryotic translation initiation factor 3 subunit D (549 aa).

Residues 101 to 130 (QSYQRGRARGQRGRGARGARTPGGMTTLNK) are disordered. Residues 106–117 (GRARGQRGRGAR) show a composition bias toward basic residues. An RNA gate region spans residues 277 to 291 (EFDLLTVNETSVEPP). Residues 521–549 (ESDASEESGDEQADTPFAPLYSYGNSKRV) are disordered. The segment covering 523-533 (DASEESGDEQA) has biased composition (acidic residues).

This sequence belongs to the eIF-3 subunit D family. In terms of assembly, component of the eukaryotic translation initiation factor 3 (eIF-3) complex.

It localises to the cytoplasm. In terms of biological role, mRNA cap-binding component of the eukaryotic translation initiation factor 3 (eIF-3) complex, which is involved in protein synthesis of a specialized repertoire of mRNAs and, together with other initiation factors, stimulates binding of mRNA and methionyl-tRNAi to the 40S ribosome. The eIF-3 complex specifically targets and initiates translation of a subset of mRNAs involved in cell proliferation. In the eIF-3 complex, eif3d specifically recognizes and binds the 7-methylguanosine cap of a subset of mRNAs. This chain is Eukaryotic translation initiation factor 3 subunit D, found in Bombyx mori (Silk moth).